We begin with the raw amino-acid sequence, 537 residues long: MSLIPKPISKVSTFTFILLILLSFTIIIAYSSPDSNVESNEPGFDSDLDQLLAVDEQLQEDRPEQQSEAETVSKAQRIVLELNGDYTKRVIDGNEFVMVLGYAPWCARSAELMPRFAEAATALKEIGSSVLMAKIDGDRYSKIASELEIKGFPTLLLFVNGTSLTYNGGSSAEDIVIWVQKKTGAPIITLNTVDEAPRFLDKYHTFVLGLFEKFEGSEHNEFVKAAKSDDEIQFIETRDSDVAKLLFPDLKSNNVFIGLVKPEAERYTVYDGSYKMEKILEFLGSNKFPLFTKLTETNTVWVYSSPVKLQVMLFSKADDFQKLAQPLEDIARKFKSKLMFIYVDITNENLAMPFLILFGIEAGNKTVVAAFDNNLNSKYLLESDPSPNSIEEFCSGLAHGTVSRYYRSEPVPDNENASIVTVVGKTFDGLVLNSRENVLLEVHTPWCVNCEALSKQIEKLAKHFKGFENLVFARIDASANEHTKLQVDDKYPIILLYKSGEKEKPLKLSTKLSAKDIAVFINEELLKPKNGSAKDEL.

An N-terminal signal peptide occupies residues 1 to 29 (MSLIPKPISKVSTFTFILLILLSFTIIIA). Positions 58–184 (LQEDRPEQQS…IVIWVQKKTG (127 aa)) constitute a Thioredoxin 1 domain. The active-site Nucleophile is the cysteine 106. N-linked (GlcNAc...) asparagine glycosylation is found at asparagine 160, asparagine 364, and asparagine 416. Residues 380 to 526 (LLESDPSPNS…IAVFINEELL (147 aa)) enclose the Thioredoxin 2 domain. Active-site nucleophile residues include cysteine 447 and cysteine 450. Cysteine 447 and cysteine 450 are disulfide-bonded. An N-linked (GlcNAc...) asparagine glycan is attached at asparagine 530. The Prevents secretion from ER signature appears at 534-537 (KDEL).

It belongs to the protein disulfide isomerase family. In terms of tissue distribution, widely expressed.

Its subcellular location is the endoplasmic reticulum lumen. The enzyme catalyses Catalyzes the rearrangement of -S-S- bonds in proteins.. Its function is as follows. Acts as a protein-folding catalyst that interacts with nascent polypeptides to catalyze the formation, isomerization, and reduction or oxidation of disulfide bonds. The protein is Protein disulfide isomerase-like 1-5 (PDIL1-5) of Arabidopsis thaliana (Mouse-ear cress).